We begin with the raw amino-acid sequence, 290 residues long: MEGVNGKKVGHLCENISSFVRQCIFSILSVGPVPSHIAFIMDGNRRYSKKQNLLDGNGHRAGFSALINMLKYCYELGVKYITVYAFSIDNFKRRPEEVVSLMKLMQEKIDELTKEESIVNRLGIRIYFQGNLKLLSDHVRLAAERAMVKTSGNSKAILSICVAYTSTDEIVHAVQESCEEKWDEIRKLDVNNDGSNLIRLEENVKDKNEHRIGVTNVDRHMYMSVCPDPDIIIRTSGATRLSNFLLWQSSHCLLYSPAALWPEIGLRHLIWVILDFQRNYLYLKEKKKQS.

Residue Asp42 is part of the active site.

This sequence belongs to the UPP synthase family. It depends on Mg(2+) as a cofactor. As to expression, expressed in leaf trichomes and stem trichomes. Expressed at low levels in young leaves, stems and old leaves.

It is found in the cytoplasm. Its subcellular location is the cytosol. The catalysed reaction is n isopentenyl diphosphate + (2E,6E)-farnesyl diphosphate = a di-trans,poly-cis-polyprenyl diphosphate + n diphosphate. Catalyzes cis-prenyl chain elongation to produce the polyprenyl backbone of dolichol, a glycosyl carrier-lipid required for the biosynthesis of several classes of glycoprotein. In Solanum lycopersicum (Tomato), this protein is Dehydrodolichyl diphosphate synthase CPT3.